Here is a 210-residue protein sequence, read N- to C-terminus: Somatotropin-2 (210 aa).

The N-terminal stretch at 1-22 (MARALVLLSVVLVSLLVNQGRA) is a signal peptide. H38 lines the Zn(2+) pocket. A disulfide bridge connects residues C71 and C183. E192 lines the Zn(2+) pocket. C200 and C208 form a disulfide bridge.

It belongs to the somatotropin/prolactin family.

Its subcellular location is the secreted. In terms of biological role, growth hormone plays an important role in growth control and is involved in the regulation of several anabolic processes. Implicated as an osmoregulatory substance important for seawater adaptation. The sequence is that of Somatotropin-2 (gh2) from Carassius auratus (Goldfish).